Consider the following 360-residue polypeptide: Probable butyrate kinase (360 aa).

Belongs to the acetokinase family.

The protein resides in the cytoplasm. It catalyses the reaction butanoate + ATP = butanoyl phosphate + ADP. This Enterococcus faecalis (strain ATCC 700802 / V583) protein is Probable butyrate kinase.